Reading from the N-terminus, the 325-residue chain is Protease HtpX homolog 2 (325 aa).

2 helical membrane-spanning segments follow: residues 17 to 37 and 42 to 62; these read IAIL…FFGF and LLIT…WLFG. His-146 is a Zn(2+) binding site. Glu-147 is a catalytic residue. Zn(2+) is bound at residue His-150. Transmembrane regions (helical) follow at residues 158–178 and 195–215; these read LLLA…GLWW and ILFL…LFVL. Glu-222 lines the Zn(2+) pocket.

This sequence belongs to the peptidase M48B family. Zn(2+) is required as a cofactor.

Its subcellular location is the cell membrane. This Sulfurisphaera tokodaii (strain DSM 16993 / JCM 10545 / NBRC 100140 / 7) (Sulfolobus tokodaii) protein is Protease HtpX homolog 2.